The sequence spans 348 residues: Rhodopsin (348 aa).

Met-1 is subject to N-acetylmethionine. At 1–36 (MNGTEGPNFYVPFSNKTGVVRSPFEAPQYYLAEPWQ) the chain is on the extracellular side. N-linked (GlcNAc...) asparagine glycans are attached at residues Asn-2 and Asn-15. A helical transmembrane segment spans residues 37-61 (FSMLAAYMFLLIMLGFPINFLTLYV). Over 62–73 (TVQHKKLRTPLN) the chain is Cytoplasmic. A helical transmembrane segment spans residues 74-96 (YILLNLAVADLFMVFGGFTTTLY). Topologically, residues 97–110 (TSLHGYFVFGPTGC) are extracellular. Cys-110 and Cys-187 are oxidised to a cystine. A helical transmembrane segment spans residues 111–133 (NLEGFFATLGGEIALWSLVVLAI). The short motif at 134-136 (ERY) is the 'Ionic lock' involved in activated form stabilization element. Topologically, residues 134 to 152 (ERYVVVCKPMSNFRFGENH) are cytoplasmic. Residues 153 to 173 (AIMGVAFTWVMALACAAPPLV) traverse the membrane as a helical segment. The Extracellular portion of the chain corresponds to 174 to 202 (GWSRYIPEGMQCSCGIDYYTPHEETNNES). Glu-201 provides a ligand contact to Zn(2+). The chain crosses the membrane as a helical span at residues 203–224 (FVIYMFVVHFIIPLIVIFFCYG). Over 225 to 252 (QLVFTVKEAAAQQQESATTQKAEKEVTR) the chain is Cytoplasmic. The chain crosses the membrane as a helical span at residues 253 to 274 (MVIIMVIAFLICWLPYAGVAFY). Residues 275 to 286 (IFTHQGSDFGPI) lie on the Extracellular side of the membrane. Position 279 (Gln-279) interacts with Zn(2+). A helical transmembrane segment spans residues 287–308 (FMTIPAFFAKTSAVYNPVIYIM). Residue Lys-296 is modified to N6-(retinylidene)lysine. The Cytoplasmic portion of the chain corresponds to 309–348 (MNKQFRNCMVTTLCCGKNPLGDDEASTTVSKTETSQVAPA). 2 S-palmitoyl cysteine lipidation sites follow: Cys-322 and Cys-323. The interval 330–348 (DDEASTTVSKTETSQVAPA) is interaction with SAG. Ser-334 carries the post-translational modification Phosphoserine. 2 positions are modified to phosphothreonine: Thr-335 and Thr-336. The residue at position 338 (Ser-338) is a Phosphoserine. 2 positions are modified to phosphothreonine: Thr-340 and Thr-342. Residue Ser-343 is modified to Phosphoserine; by RK and GRK7.

It belongs to the G-protein coupled receptor 1 family. Opsin subfamily. Homodimer. May form a complex composed of RHO, GRK1 and RCVRN in a Ca(2+)-dependent manner; RCVRN prevents the interaction between GRK1 and RHO. Interacts with GRK1. Interacts (phosphorylated form) with SAG. Interacts with GNAT1. Interacts with GNAT3. SAG and G-proteins compete for a common binding site. Interacts with PRCD; the interaction promotes PRCD stability. Forms a complex with ASAP1 and ARF4. Forms a complex with ASAP1, RAB11A, Rabin8/RAB3IP, ARF4 and RAB11FIP3; the complex regulates Golgi-to-cilia rhodopsin/RHO transport in photoreceptors. In terms of processing, phosphorylated on some or all of the serine and threonine residues present in the C-terminal region. Contains one covalently linked retinal chromophore. Upon light absorption, the covalently bound 11-cis-retinal is converted to all-trans-retinal. After hydrolysis of the Schiff base and release of the covalently bound all-trans-retinal, active rhodopsin is regenerated by binding of a fresh molecule of 11-cis-retinal. In terms of tissue distribution, expressed in rod-shaped photoreceptor cells in the retina that mediate vision in dim light (at protein level).

It localises to the membrane. Its subcellular location is the cell projection. The protein resides in the cilium. It is found in the photoreceptor outer segment. In terms of biological role, photoreceptor required for image-forming vision at low light intensity. Required for photoreceptor cell viability after birth. Light-induced isomerization of 11-cis to all-trans retinal triggers a conformational change that activates signaling via G-proteins. Subsequent receptor phosphorylation mediates displacement of the bound G-protein alpha subunit by the arrestin SAG and terminates signaling. This is Rhodopsin (RHO) from Bos taurus (Bovine).